Reading from the N-terminus, the 1006-residue chain is Collagen alpha-2(I) chain (1006 aa).

The segment at 1-84 is disordered; it reads SGGFDFSFLP…GFPGTPGLPG (84 aa). 4-hydroxyproline is present on residues Pro-10, Pro-13, Pro-35, and Pro-41. The span at 28 to 64 shows a compositional bias: low complexity; sequence LMGPRGPPGASGAPGPQGFQGPAGEPGEPGQTGPAGA. Lys-86 is modified (5-hydroxylysine; alternate). Lys-86 carries O-linked (Gal...) hydroxylysine; alternate glycosylation. A disordered region spans residues 99-1006; that stretch reads GQPGAAGVKG…FGYEGDFYRA (908 aa). Composition is skewed to low complexity over residues 142 to 163 and 209 to 230; these read SRGS…SAGP and PGAN…AGAP. Gly residues predominate over residues 264-273; sequence GESGGKGEPG. Positions 274-284 are enriched in low complexity; it reads SAGPQGPPGSS. Gly residues predominate over residues 306 to 315; sequence GLRGGPGSRG. The segment covering 328–344 has biased composition (low complexity); that stretch reads PAGARGASGPAGVRGPS. 4-hydroxyproline is present on residues Pro-350 and Pro-353. Over residues 379–398 the composition is skewed to low complexity; it reads LPGIDGRPGPIGPAGARGEA. The span at 447-456 shows a compositional bias: gly residues; it reads GVQGGKGEQG. 2 stretches are compositionally biased toward low complexity: residues 503 to 520 and 532 to 542; these read PGES…SRGP and EPGVVGAPGTA. Residues 543-552 show a composition bias toward gly residues; the sequence is GPAGSGGLPG. Low complexity-rich tracts occupy residues 585–615 and 622–642; these read AVGA…PRGS and VGPA…QPGA. Over residues 643–652 the composition is skewed to basic and acidic residues; the sequence is KGERGTKGPK. A compositionally biased stretch (low complexity) spans 660-670; the sequence is PTGPVGSAGPA. The span at 680–689 shows a compositional bias: gly residues; that stretch reads GSRGDGGPPG. The span at 691–700 shows a compositional bias: low complexity; it reads TGFPGAAGRT. Residues 737-746 are compositionally biased toward gly residues; that stretch reads GETGAGGPPG. Composition is skewed to low complexity over residues 754-781 and 789-799; these read SGEP…LGLP and LPGVAGAVGEP. Over residues 800-810 the composition is skewed to gly residues; sequence GPLGIGPPGAR. Residues 837 to 882 show a composition bias toward low complexity; the sequence is YAGNPGPVGAAGAPGPHGAVGPAGKHGNRGEPGPVGSAGPVGALGP. Basic and acidic residues predominate over residues 892-903; that stretch reads RGDKGEAGDKGP. The span at 976-988 shows a compositional bias: pro residues; sequence SGPPGPPGPPGPP.

Belongs to the fibrillar collagen family. As to quaternary structure, trimers of one alpha 2(I) and two alpha 1(I) chains. Interacts (via C-terminus) with TMEM131 (via PapD-L domain); the interaction is direct and is involved in assembly and TRAPPIII ER-to-Golgi transport complex-dependent secretion of collagen. Post-translationally, prolines at the third position of the tripeptide repeating unit (G-X-Y) are hydroxylated in some or all of the chains. As to expression, expressed in bones.

The protein localises to the secreted. Its subcellular location is the extracellular space. It is found in the extracellular matrix. In terms of biological role, type I collagen is a member of group I collagen (fibrillar forming collagen). The sequence is that of Collagen alpha-2(I) chain from Choloepus hoffmanni (Hoffmann's two-fingered sloth).